Here is a 314-residue protein sequence, read N- to C-terminus: Homeobox protein knotted-1-like 3 (314 aa).

In terms of domain architecture, ELK spans 218-238; the sequence is ELKIELKQGFKSRIEDVREEI. The homeobox; TALE-type DNA-binding region spans 239–302; that stretch reads LRKRRAGKLP…NQRKRNWHNN (64 aa).

This sequence belongs to the TALE/KNOX homeobox family. As to expression, isoform 1 is expressed in roots and flowers, and at lower levels in leaf blades and leaf sheaths. Isoform 2 is expressed in roots and flowers.

The protein localises to the nucleus. The polypeptide is Homeobox protein knotted-1-like 3 (HOS66) (Oryza sativa subsp. japonica (Rice)).